Here is a 362-residue protein sequence, read N- to C-terminus: Phosphoserine aminotransferase (362 aa).

Position 43 (arginine 43) interacts with L-glutamate. Residues 77 to 78 (AR), tryptophan 103, threonine 153, aspartate 173, and glutamine 196 contribute to the pyridoxal 5'-phosphate site. Lysine 197 carries the N6-(pyridoxal phosphate)lysine modification.

It belongs to the class-V pyridoxal-phosphate-dependent aminotransferase family. SerC subfamily. Homodimer. Pyridoxal 5'-phosphate is required as a cofactor.

It is found in the cytoplasm. It catalyses the reaction O-phospho-L-serine + 2-oxoglutarate = 3-phosphooxypyruvate + L-glutamate. The enzyme catalyses 4-(phosphooxy)-L-threonine + 2-oxoglutarate = (R)-3-hydroxy-2-oxo-4-phosphooxybutanoate + L-glutamate. It participates in amino-acid biosynthesis; L-serine biosynthesis; L-serine from 3-phospho-D-glycerate: step 2/3. The protein operates within cofactor biosynthesis; pyridoxine 5'-phosphate biosynthesis; pyridoxine 5'-phosphate from D-erythrose 4-phosphate: step 3/5. Catalyzes the reversible conversion of 3-phosphohydroxypyruvate to phosphoserine and of 3-hydroxy-2-oxo-4-phosphonooxybutanoate to phosphohydroxythreonine. The chain is Phosphoserine aminotransferase from Legionella pneumophila subsp. pneumophila (strain Philadelphia 1 / ATCC 33152 / DSM 7513).